We begin with the raw amino-acid sequence, 104 residues long: Large ribosomal subunit protein bL21 (104 aa).

Belongs to the bacterial ribosomal protein bL21 family. As to quaternary structure, part of the 50S ribosomal subunit. Contacts protein L20.

Functionally, this protein binds to 23S rRNA in the presence of protein L20. In Agrobacterium fabrum (strain C58 / ATCC 33970) (Agrobacterium tumefaciens (strain C58)), this protein is Large ribosomal subunit protein bL21.